Reading from the N-terminus, the 143-residue chain is Protein Wnt-1 (143 aa).

The O-palmitoleoyl serine; by PORCN moiety is linked to residue S1. The interval 38-81 (EGVRGNSNRGDRGDRRDRGDRSDNGGTEANFQPYNSNHKPPGPR) is disordered. Basic and acidic residues predominate over residues 46–60 (RGDRGDRRDRGDRSD). The segment covering 64–75 (TEANFQPYNSNH) has biased composition (polar residues). A disulfide bond links C109 and C124. Residues N110 and N111 are each glycosylated (N-linked (GlcNAc...) asparagine).

The protein belongs to the Wnt family. Palmitoleoylation is required for efficient binding to frizzled receptors. Palmitoleoylation is necessary for proper trafficking to cell surface. Depalmitoleoylated by NOTUM, leading to inhibit Wnt signaling pathway.

The protein resides in the secreted. Its subcellular location is the extracellular space. It is found in the extracellular matrix. Its function is as follows. Ligand for members of the frizzled family of seven transmembrane receptors. Probable developmental protein. The chain is Protein Wnt-1 (WNT-1) from Evasterias troschelii (Mottled sea star).